Reading from the N-terminus, the 399-residue chain is Maltose excess protein 1-like, chloroplastic (399 aa).

The N-terminal 67 residues, 1–67 (MSSSVSSVRL…RRRRYALPPV (67 aa)), are a transit peptide targeting the chloroplast. A run of 9 helical transmembrane segments spans residues 93–113 (FAGA…ILNA), 123–143 (ALFA…LSLL), 154–174 (AVIV…QLAM), 180–202 (LPQF…LNYF), 217–237 (ITIG…VPFI), 238–258 (PNSL…VVMA), 268–288 (INFV…WMPV), 306–326 (AFTM…AVFI), and 361–381 (FLAT…RDTI).

It is found in the plastid. The protein localises to the chloroplast inner membrane. Probable maltose transporter. Essential for the conversion of starch to sucrose in leaves at night, probably via the export of maltose from the chloroplast. The chain is Maltose excess protein 1-like, chloroplastic from Oryza sativa subsp. japonica (Rice).